The chain runs to 571 residues: RNA polymerase sigma factor SigA (571 aa).

A sigma-70 factor domain-2 region spans residues 321-391; it reads MVESNLRLVI…TRAIADQART (71 aa). An Interaction with polymerase core subunit RpoC motif is present at residues 345–348; the sequence is DLIQ. The segment at 400–476 is sigma-70 factor domain-3; sequence ETINKVLRGA…DTAVESPAEA (77 aa). The interval 489–542 is sigma-70 factor domain-4; sequence VLKTLTDRERFVLIHRFGLLDGRPKTLEEVGSAFNVTRERIRQIEAKALRKMRH. Positions 515–534 form a DNA-binding region, H-T-H motif; it reads LEEVGSAFNVTRERIRQIEA.

The protein belongs to the sigma-70 factor family. RpoD/SigA subfamily. Interacts transiently with the RNA polymerase catalytic core.

It localises to the cytoplasm. Functionally, sigma factors are initiation factors that promote the attachment of RNA polymerase to specific initiation sites and are then released. This sigma factor is the primary sigma factor during exponential growth. The protein is RNA polymerase sigma factor SigA of Chlamydia muridarum (strain MoPn / Nigg).